The primary structure comprises 178 residues: Peptide methionine sulfoxide reductase MsrA (178 aa).

Cysteine 11 is a catalytic residue.

Belongs to the MsrA Met sulfoxide reductase family.

The enzyme catalyses L-methionyl-[protein] + [thioredoxin]-disulfide + H2O = L-methionyl-(S)-S-oxide-[protein] + [thioredoxin]-dithiol. It carries out the reaction [thioredoxin]-disulfide + L-methionine + H2O = L-methionine (S)-S-oxide + [thioredoxin]-dithiol. Functionally, has an important function as a repair enzyme for proteins that have been inactivated by oxidation. Catalyzes the reversible oxidation-reduction of methionine sulfoxide in proteins to methionine. The chain is Peptide methionine sulfoxide reductase MsrA from Natronomonas pharaonis (strain ATCC 35678 / DSM 2160 / CIP 103997 / JCM 8858 / NBRC 14720 / NCIMB 2260 / Gabara) (Halobacterium pharaonis).